A 223-amino-acid polypeptide reads, in one-letter code: Small ribosomal subunit protein uS3 (223 aa).

In terms of domain architecture, KH type-2 spans Val39–Arg107.

The protein belongs to the universal ribosomal protein uS3 family. In terms of assembly, part of the 30S ribosomal subunit. Forms a tight complex with proteins S10 and S14.

Binds the lower part of the 30S subunit head. Binds mRNA in the 70S ribosome, positioning it for translation. In Methylococcus capsulatus (strain ATCC 33009 / NCIMB 11132 / Bath), this protein is Small ribosomal subunit protein uS3.